We begin with the raw amino-acid sequence, 317 residues long: tRNA dimethylallyltransferase (317 aa).

ATP is bound at residue glycine 19–serine 26. Threonine 21–serine 26 contributes to the substrate binding site. An interaction with substrate tRNA region spans residues aspartate 49–glutamine 52.

This sequence belongs to the IPP transferase family. As to quaternary structure, monomer. It depends on Mg(2+) as a cofactor.

It catalyses the reaction adenosine(37) in tRNA + dimethylallyl diphosphate = N(6)-dimethylallyladenosine(37) in tRNA + diphosphate. Its function is as follows. Catalyzes the transfer of a dimethylallyl group onto the adenine at position 37 in tRNAs that read codons beginning with uridine, leading to the formation of N6-(dimethylallyl)adenosine (i(6)A). This chain is tRNA dimethylallyltransferase, found in Erythrobacter litoralis (strain HTCC2594).